A 148-amino-acid polypeptide reads, in one-letter code: Male-specific protein scotti (148 aa).

The disordered stretch occupies residues 56 to 78 (PQEPPLGVFPAQGGPNGPPRLRK). N-linked (GlcNAc...) asparagine glycosylation occurs at Asn-129.

This sequence belongs to the male-specific scotti family.

Functionally, post-meiotically transcribed gene that has a role in late spermiogenesis; required for actin cone progression during spermatid individualization. The sequence is that of Male-specific protein scotti from Drosophila sechellia (Fruit fly).